The following is a 95-amino-acid chain: Protein TusB (95 aa).

It belongs to the DsrH/TusB family. Heterohexamer, formed by a dimer of trimers. The hexameric TusBCD complex contains 2 copies each of TusB, TusC and TusD. The TusBCD complex interacts with TusE.

It localises to the cytoplasm. In terms of biological role, part of a sulfur-relay system required for 2-thiolation of 5-methylaminomethyl-2-thiouridine (mnm(5)s(2)U) at tRNA wobble positions. The protein is Protein TusB of Salmonella dublin (strain CT_02021853).